The sequence spans 94 residues: Large ribosomal subunit protein bL27 (94 aa).

Positions 1 to 9 (MNLANLQLF) are excised as a propeptide. The interval 11–34 (HKKGGGSTSNGRDSQAKRLGAKAA) is disordered.

It belongs to the bacterial ribosomal protein bL27 family. Post-translationally, the N-terminus is cleaved by ribosomal processing cysteine protease Prp.

The chain is Large ribosomal subunit protein bL27 from Streptococcus pyogenes serotype M3 (strain ATCC BAA-595 / MGAS315).